The sequence spans 192 residues: Protein hunchback (192 aa).

3 disordered regions span residues 16-59 (SHHH…SNTN), 88-108 (AAMT…WPGL), and 151-192 (ALTP…KYMA). Basic residues predominate over residues 17–31 (HHHHHHHAHHSRRQH). Residues 92–103 (PSPSNNDQNSPL) show a composition bias toward polar residues. The segment covering 173–192 (EPEKEHDLMSNSSEDMKYMA) has biased composition (basic and acidic residues).

The protein belongs to the hunchback C2H2-type zinc-finger protein family.

The protein resides in the nucleus. Functionally, gap class segmentation protein that controls development of head structures. The sequence is that of Protein hunchback (hb) from Drosophila adiastola (Fruit fly).